The chain runs to 222 residues: Charged multivesicular body protein 4a (222 aa).

Disordered stretches follow at residues 1 to 21 and 177 to 222; these read MSGLGRLFGRGKKEKGPTPEE and LLHV…EWVS. Residues 1–116 are interaction with phosphoinosides; the sequence is MSGLGRLFGR…ELAAQGLKKA (116 aa). The intramolecular interaction with C-terminus stretch occupies residues 1–150; that stretch reads MSGLGRLFGR…QISDAISRPV (150 aa). Coiled coils occupy residues 20–105 and 155–180; these read EEAI…VLRT and DVDEDELLEELEELEQEELARELLHV. Residues 151-222 are intramolecular interaction with N-terminus; sequence GFGDDVDEDE…ELKQLAEWVS (72 aa). Ser-196 carries the phosphoserine modification.

The protein belongs to the SNF7 family. In terms of assembly, probable core component of the endosomal sorting required for transport complex III (ESCRT-III). ESCRT-III components are thought to multimerize to form a flat lattice on the perimeter membrane of the endosome. Several assembly forms of ESCRT-III may exist that interact and act sequentially. Self-associates; overexpression leads to the assembly of filaments that curve and associate to create circular rings. Interacts with CHMP2A. Interacts with CHMP3; the interaction requires the release of CHMP4A autoinhibition. Interacts with CHMP4B. Interacts with CHMP4C. Interacts with CHMP6. Interacts with VPS4A. Interacts with PDCD6IP; the interaction is direct.

The protein resides in the cytoplasmic vesicle membrane. The protein localises to the late endosome membrane. Functionally, probable core component of the endosomal sorting required for transport complex III (ESCRT-III) which is involved in multivesicular bodies (MVBs) formation and sorting of endosomal cargo proteins into MVBs. MVBs contain intraluminal vesicles (ILVs) that are generated by invagination and scission from the limiting membrane of the endosome and mostly are delivered to lysosomes enabling degradation of membrane proteins, such as stimulated growth factor receptors, lysosomal enzymes and lipids. The MVB pathway appears to require the sequential function of ESCRT-O, -I,-II and -III complexes. ESCRT-III proteins mostly dissociate from the invaginating membrane before the ILV is released. The ESCRT machinery also functions in topologically equivalent membrane fission events, such as the terminal stages of cytokinesis and the budding of enveloped viruses (lentiviruses). ESCRT-III proteins are believed to mediate the necessary vesicle extrusion and/or membrane fission activities, possibly in conjunction with the AAA ATPase VPS4. When overexpressed, membrane-assembled circular arrays of CHMP4A filaments can promote or stabilize negative curvature and outward budding. CHMP4A/B/C are required for the exosomal release of SDCBP, CD63 and syndecan. The chain is Charged multivesicular body protein 4a (CHMP4A) from Bos taurus (Bovine).